Reading from the N-terminus, the 383-residue chain is Acetylornithine deacetylase (383 aa).

Position 80 (histidine 80) interacts with Zn(2+). Aspartate 82 is a catalytic residue. Aspartate 112 serves as a coordination point for Zn(2+). The active site involves glutamate 144. Glutamate 145, glutamate 169, and histidine 355 together coordinate Zn(2+).

It belongs to the peptidase M20A family. ArgE subfamily. As to quaternary structure, homodimer. Zn(2+) serves as cofactor. Co(2+) is required as a cofactor. It depends on glutathione as a cofactor.

It is found in the cytoplasm. The catalysed reaction is N(2)-acetyl-L-ornithine + H2O = L-ornithine + acetate. Its pathway is amino-acid biosynthesis; L-arginine biosynthesis; L-ornithine from N(2)-acetyl-L-ornithine (linear): step 1/1. Functionally, catalyzes the hydrolysis of the amide bond of N(2)-acetylated L-amino acids. Cleaves the acetyl group from N-acetyl-L-ornithine to form L-ornithine, an intermediate in L-arginine biosynthesis pathway, and a branchpoint in the synthesis of polyamines. The sequence is that of Acetylornithine deacetylase from Escherichia coli (strain K12 / MC4100 / BW2952).